Reading from the N-terminus, the 1066-residue chain is E3 ubiquitin-protein ligase RNF31 (1066 aa).

Positions 1 to 479 are polyubiquitin-binding; sequence MPGDEERGFL…PEKQRQDKMR (479 aa). The 72-residue stretch at 70–141 folds into the PUB domain; that stretch reads TLSTALNILE…SFPEGQEEPD (72 aa). A disordered region spans residues 251–287; it reads LRQALPGSHQTASLSSSLPASSQPRPPSSSLALGDSS. Over residues 262-287 the composition is skewed to low complexity; it reads ASLSSSLPASSQPRPPSSSLALGDSS. 2 consecutive RanBP2-type zinc fingers follow at residues 293–325 and 344–373; these read PANACLPWHCLTCATLNEPWAVFCAVCSQPKGC and ARDQWACQSCTFENEAAAVLCAICERPRLA. Position 377 is a phosphoserine (Ser377). The segment at 403-432 adopts a RanBP2-type 3 zinc-finger fold; that stretch reads QPQVWYCDHCTFCNSGPVWVCAMCNRTRDP. Residues 434–478 are disordered; it reads PTQPALQSYPSSLEKGRPKPGSSQHLGSSLPASCGDPEKQRQDKM. The span at 454–464 shows a compositional bias: polar residues; the sequence is GSSQHLGSSLP. Over residues 469-478 the composition is skewed to basic and acidic residues; sequence DPEKQRQDKM. The interaction with RBCK1 stretch occupies residues 557–610; that stretch reads GNLDEAVEECVRARRRKVHELQSLGFGPKEGSLQALFQHGGDVARALTELQRQR. Positions 558–609 constitute a UBA domain; the sequence is NLDEAVEECVRARRRKVHELQSLGFGPKEGSLQALFQHGGDVARALTELQRQ. Positions 689-923 are TRIAD supradomain; it reads LAQECAVCGW…KSLHGHHPRD (235 aa). The Zn(2+) site is built by Cys693, Cys696, Cys711, Cys713, Cys716, Cys719, Cys738, Cys741, Cys793, Cys796, Cys811, Cys814, Cys819, Cys822, His830, Cys835, Cys865, and Cys868. The segment at 693–743 adopts an RING-type 1 zinc-finger fold; the sequence is CAVCGWALPRNRMQALISCECTICPECFRQHFTIALKEKHITDMVCPACGR. The IBR-type zinc finger occupies 773–835; it reads ALFHKKLTEA…WEEQHRGRSC (63 aa). The RING-type 2; atypical zinc finger occupies 865–895; the sequence is CPKCKFSYALARGGCMHFHCTQCRHQFCSGC. Cys879 is an active-site residue. Residues Cys884, Cys887, Cys892, Cys895, Cys910, and His919 each contribute to the Zn(2+) site. The tract at residues 904 to 1066 is LDD domain; the sequence is KCPDPNCKVK…LGQSIARRRK (163 aa).

The protein belongs to the RBR family. Component of the LUBAC complex (linear ubiquitin chain assembly complex) which consists of SHARPIN, RBCK1 and RNF31. LUBAC has a MW of approximately 600 kDa suggesting a heteromultimeric assembly of its subunits. Associates with the TNF-R1 signaling complex (TNF-RSC) in a stimulation-dependent manner. Interacts (via the PUB domain) with OTULIN (via the PIM motif); the interaction is direct. Interacts (via the PUB domain) with VCP (via the PIM motif). Interacts (via the PUB domain) with SPATA2 (via the PIM motif); interaction is direct and bridges RNF31 and CYLD. Interacts with CYLD; the interaction is indirect and is mediated via SPATA2. Interacts with MUSK. Interacts with CARD11, promoting linear ubiquitination of BCL10. Autoubiquitinated. Interaction with OTULIN is required to suppress formation of 'Met-1'-linked polyubiquitin chains and prevent subsequent inactivation of the LUBAC complex. In terms of processing, cleaved by caspase during apoptosis. In terms of tissue distribution, widely expressed (at protein level). Not expressed in heart.

It is found in the cytoplasm. It carries out the reaction [E2 ubiquitin-conjugating enzyme]-S-ubiquitinyl-L-cysteine + [acceptor protein]-L-lysine = [E2 ubiquitin-conjugating enzyme]-L-cysteine + [acceptor protein]-N(6)-ubiquitinyl-L-lysine.. Its pathway is protein modification; protein ubiquitination. Its function is as follows. E3 ubiquitin-protein ligase component of the LUBAC complex which conjugates linear ('Met-1'-linked) polyubiquitin chains to substrates and plays a key role in NF-kappa-B activation and regulation of inflammation. LUBAC conjugates linear polyubiquitin to IKBKG and RIPK1 and is involved in activation of the canonical NF-kappa-B and the JNK signaling pathways. Linear ubiquitination mediated by the LUBAC complex interferes with TNF-induced cell death and thereby prevents inflammation. LUBAC is recruited to the TNF-R1 signaling complex (TNF-RSC) following polyubiquitination of TNF-RSC components by BIRC2 and/or BIRC3 and to conjugate linear polyubiquitin to IKBKG and possibly other components contributing to the stability of the complex. The LUBAC complex is also involved in innate immunity by conjugating linear polyubiquitin chains at the surface of bacteria invading the cytosol to form the ubiquitin coat surrounding bacteria. LUBAC is not able to initiate formation of the bacterial ubiquitin coat, and can only promote formation of linear polyubiquitins on pre-existing ubiquitin. Recruited to the surface of bacteria by RNF213, which initiates the bacterial ubiquitin coat. The bacterial ubiquitin coat acts as an 'eat-me' signal for xenophagy and promotes NF-kappa-B activation. Together with OTULIN, the LUBAC complex regulates the canonical Wnt signaling during angiogenesis. RNF31 is required for linear ubiquitination of BCL10, thereby promoting TCR-induced NF-kappa-B activation. Binds polyubiquitin of different linkage types. The polypeptide is E3 ubiquitin-protein ligase RNF31 (Mus musculus (Mouse)).